We begin with the raw amino-acid sequence, 61 residues long: Large ribosomal subunit protein bL32 (61 aa).

This sequence belongs to the bacterial ribosomal protein bL32 family.

In Cytophaga hutchinsonii (strain ATCC 33406 / DSM 1761 / CIP 103989 / NBRC 15051 / NCIMB 9469 / D465), this protein is Large ribosomal subunit protein bL32.